The sequence spans 279 residues: Acetyl-coenzyme A carboxylase carboxyl transferase subunit beta (279 aa).

Residues 27–279 enclose the CoA carboxyltransferase N-terminal domain; that stretch reads LFLACPYCGT…IVKLHHRTEI (253 aa). Residues C31, C34, C49, and C52 each contribute to the Zn(2+) site. A C4-type zinc finger spans residues 31–52; that stretch reads CPYCGTQMYNKQLGDYRVCAKC.

This sequence belongs to the AccD/PCCB family. As to quaternary structure, acetyl-CoA carboxylase is a heterohexamer composed of biotin carboxyl carrier protein (AccB), biotin carboxylase (AccC) and two subunits each of ACCase subunit alpha (AccA) and ACCase subunit beta (AccD). Zn(2+) serves as cofactor.

It localises to the cytoplasm. The catalysed reaction is N(6)-carboxybiotinyl-L-lysyl-[protein] + acetyl-CoA = N(6)-biotinyl-L-lysyl-[protein] + malonyl-CoA. It participates in lipid metabolism; malonyl-CoA biosynthesis; malonyl-CoA from acetyl-CoA: step 1/1. Its function is as follows. Component of the acetyl coenzyme A carboxylase (ACC) complex. Biotin carboxylase (BC) catalyzes the carboxylation of biotin on its carrier protein (BCCP) and then the CO(2) group is transferred by the transcarboxylase to acetyl-CoA to form malonyl-CoA. The polypeptide is Acetyl-coenzyme A carboxylase carboxyl transferase subunit beta (Leuconostoc citreum (strain KM20)).